The primary structure comprises 224 residues: Deoxyribose-phosphate aldolase (224 aa).

Residue Asp-93 is the Proton donor/acceptor of the active site. Lys-159 (schiff-base intermediate with acetaldehyde) is an active-site residue. Lys-189 serves as the catalytic Proton donor/acceptor.

It belongs to the DeoC/FbaB aldolase family. DeoC type 1 subfamily.

The protein localises to the cytoplasm. The catalysed reaction is 2-deoxy-D-ribose 5-phosphate = D-glyceraldehyde 3-phosphate + acetaldehyde. Its pathway is carbohydrate degradation; 2-deoxy-D-ribose 1-phosphate degradation; D-glyceraldehyde 3-phosphate and acetaldehyde from 2-deoxy-alpha-D-ribose 1-phosphate: step 2/2. Functionally, catalyzes a reversible aldol reaction between acetaldehyde and D-glyceraldehyde 3-phosphate to generate 2-deoxy-D-ribose 5-phosphate. The polypeptide is Deoxyribose-phosphate aldolase (Mycobacterium bovis (strain ATCC BAA-935 / AF2122/97)).